The primary structure comprises 230 residues: Probable endonuclease C19F8.04c (230 aa).

The helical transmembrane segment at 10-27 (AIIGTGLITTSIGGFFFL) threads the bilayer. The TNase-like domain occupies 55 to 216 (KTMFGYVTRV…KKKKLSLWSQ (162 aa)). Arg104 is an active-site residue. Asp109 contacts Ca(2+). Active-site residues include Glu112 and Arg152.

The protein belongs to the LCL3 family.

The protein localises to the mitochondrion. It is found in the membrane. This Schizosaccharomyces pombe (strain 972 / ATCC 24843) (Fission yeast) protein is Probable endonuclease C19F8.04c.